The sequence spans 410 residues: CinA-like protein (410 aa).

It belongs to the CinA family.

This chain is CinA-like protein, found in Anaeromyxobacter sp. (strain Fw109-5).